Reading from the N-terminus, the 333-residue chain is Foldase protein PrsA (333 aa).

An N-terminal signal peptide occupies residues 1-19; that stretch reads MKKRHLLIAGLACMTILGA. Cysteine 20 is lipidated: N-palmitoyl cysteine. Cysteine 20 carries the S-diacylglycerol cysteine lipid modification. The 91-residue stretch at 155 to 245 folds into the PpiC domain; that stretch reads LIEVEASHIL…YGYHIILVTD (91 aa). Residues 291 to 333 are disordered; that stretch reads GLFDLPDAPPVEDTPEIDGEDASDEAEDQAEDADENAEEEDES. Residues 303 to 333 are compositionally biased toward acidic residues; that stretch reads DTPEIDGEDASDEAEDQAEDADENAEEEDES.

Belongs to the PrsA family.

The protein resides in the cell membrane. It carries out the reaction [protein]-peptidylproline (omega=180) = [protein]-peptidylproline (omega=0). Functionally, plays a major role in protein secretion by helping the post-translocational extracellular folding of several secreted proteins. The protein is Foldase protein PrsA of Halalkalibacterium halodurans (strain ATCC BAA-125 / DSM 18197 / FERM 7344 / JCM 9153 / C-125) (Bacillus halodurans).